Here is a 160-residue protein sequence, read N- to C-terminus: Ribonuclease H (160 aa).

The 142-residue stretch at 5 to 146 folds into the RNase H type-1 domain; sequence PGGLVEIWTD…VDQLATAARE (142 aa). Mg(2+) contacts are provided by Asp14, Glu52, Asp74, and Asp138.

It belongs to the RNase H family. Monomer. Requires Mg(2+) as cofactor.

It localises to the cytoplasm. It carries out the reaction Endonucleolytic cleavage to 5'-phosphomonoester.. Endonuclease that specifically degrades the RNA of RNA-DNA hybrids. This is Ribonuclease H from Acidiphilium cryptum (strain JF-5).